The following is an 822-amino-acid chain: MCHNSVRSGNKAGFLGIKFGSALLSIATGAIAIALLCKFHDHEAVLIVIVCSTLLYGIPSLISFITETVFAPSKFHIGYFYNVLNFALPLITMGCTVDYFHNTLRSPISVQSESHRVYITTLDSLLIFTLFINGIQLGFFLKDGNANNFGSSSNNISTDQYDKEANAVENGRFVPLKNSSQTLTPDLELLHGSPKSMNGVAWLINELSTNSNTNANKTISSDENSNSSVIRHKLGPISTSKCPKKPSHSHFSKLKKYNSFFLGPKENRYKRNTQQATKVPTEKKSNHRSSQYVSRLSTISDISKSFLNFLALNEKNGNSTSTARTPSEGRVSIIINEGNNTLKYKTPHDSHTIDSPNLELEREAIGRINSALLPACLRVTDKMISPQQSTQNEDSYQATPLIPQVEVDDDFYVGDILMTNELQDIPQVPRISSDIEDDFEQQYTKHVDLPARVTLEMWEKDQEKILQKVTTNRDKSKLLPPFRFTSESDMDPSTSTELEVELHAQNNFSFPFKSAGLQIATSDQFNQQEFKTSDTISELDEYLHDPSIQEEDASQLIESSLNQNNLSSTTIDNGPKDMSRFSTRHSPTKSIISMISGSGSVKHQHSHSTLSNFFTGHSRNNSQINQLLQGSSSNMMSNTSPHSSPTKSLRMRFGKKLSLSNISDTMSPYEGSTTDPINYSFGHGHNKNQSIDFSYVRTLQSSHSPTKSTSGNSRRDSLNNDRTQSTVNERALRTASTLFYLQHNNATCTLNGEEPVLDTPQSIQSSSSGSEQESAGSGSGYPEVVFSEYDREKWNVLRNLKEIAPEKTIESGPVEELVSPSK.

The Cytoplasmic portion of the chain corresponds to 1–13; the sequence is MCHNSVRSGNKAG. Residues 14–34 form a helical membrane-spanning segment; that stretch reads FLGIKFGSALLSIATGAIAIA. The Extracellular segment spans residues 35–44; that stretch reads LLCKFHDHEA. The helical transmembrane segment at 45-65 threads the bilayer; sequence VLIVIVCSTLLYGIPSLISFI. The Cytoplasmic segment spans residues 66–76; that stretch reads TETVFAPSKFH. A helical transmembrane segment spans residues 77–97; that stretch reads IGYFYNVLNFALPLITMGCTV. The Extracellular portion of the chain corresponds to 98–120; it reads DYFHNTLRSPISVQSESHRVYIT. Residues 121–141 traverse the membrane as a helical segment; the sequence is TLDSLLIFTLFINGIQLGFFL. Residues 142 to 822 lie on the Cytoplasmic side of the membrane; the sequence is KDGNANNFGS…PVEELVSPSK (681 aa). The interval 271–290 is disordered; that stretch reads RNTQQATKVPTEKKSNHRSS. Residue S690 is modified to Phosphoserine. Positions 698–712 are enriched in polar residues; that stretch reads TLQSSHSPTKSTSGN. Disordered stretches follow at residues 698 to 728 and 751 to 783; these read TLQS…STVN and NGEE…GYPE. Low complexity predominate over residues 761–776; sequence QSIQSSSSGSEQESAG.

Its subcellular location is the membrane. This is an uncharacterized protein from Saccharomyces cerevisiae (strain ATCC 204508 / S288c) (Baker's yeast).